Consider the following 616-residue polypeptide: MALKKAPKLFKTFFHWKLWKFSIIVFVFLVFLFLLQREVGVQDFKDEAGIEPVVGKKSHVLGLVLNAMNNIKGAKPKMQIKAPIRQTKVPGERHCLPGHYTPVELKPFLDRPLQDPNAPGASGKAFKTINLNSEEQKEKQAGEEKHCFNAFASDRISLHRDLGPDTRPPECIEQKFKRCPPLPTTSIIIVFHNEAWSTLLRTVHSVMYTSPAILLKEIILVDDASVDEYLHDKLDEYVKQFQIVKVVRQKERKGLITARLLGASVATGETLTFLDAHCECFYGWLEPLLARIAENPVAVVSPDIASIDLNTFEFSKPSPYGHSHNRGNFDWSLSFGWESLPKHENKRRKDETYPIRTPTFAGGLFSISKDYFEYIGSYDEEMEIWGGENIEMSFRVWQCGGQLEIMPCSVVGHVFRSKSPHTFPKGTQVITRNQVRLAEVWMDEYKEIFYRRNTEAAKIVKQKTFGDISKRIDLRQRLQCKNFTWYLSNVYPEAYVPDLNPLFSGYLKNIGNRMCLDVGENNHGGKPLIMYSCHGLGGNQKELCLHASKGPVQLRECTYKGQKTFAVGEEQWLHQKDQTLYNEALHMCLTGNGEHPSLASCNPSDPFQKWIFGQND.

A helical; Signal-anchor for type II membrane protein membrane pass occupies residues 13–33 (FFHWKLWKFSIIVFVFLVFLF). A catalytic subdomain A region spans residues 182-291 (LPTTSIIIVF…YGWLEPLLAR (110 aa)). Mn(2+) contacts are provided by D275, H277, and H413. The segment at 354 to 416 (PIRTPTFAGG…PCSVVGHVFR (63 aa)) is catalytic subdomain B. N-linked (GlcNAc...) asparagine glycosylation is present at N482. Positions 512-616 (NRMCLDVGEN…FQKWIFGQND (105 aa)) constitute a Ricin B-type lectin domain. C515 and C533 are disulfide-bonded. D517, E520, H534, and N539 together coordinate UDP-N-acetyl-alpha-D-galactosamine. A disulfide bridge connects residues C588 and C601.

The protein belongs to the glycosyltransferase 2 family. GalNAc-T subfamily. Mn(2+) serves as cofactor.

It is found in the golgi apparatus. Its subcellular location is the golgi stack membrane. It carries out the reaction L-seryl-[protein] + UDP-N-acetyl-alpha-D-galactosamine = a 3-O-[N-acetyl-alpha-D-galactosaminyl]-L-seryl-[protein] + UDP + H(+). It catalyses the reaction L-threonyl-[protein] + UDP-N-acetyl-alpha-D-galactosamine = a 3-O-[N-acetyl-alpha-D-galactosaminyl]-L-threonyl-[protein] + UDP + H(+). It participates in protein modification; protein glycosylation. Functionally, catalyzes the initial reaction in O-linked oligosaccharide biosynthesis, the transfer of an N-acetyl-D-galactosamine residue to a serine or threonine residue on the protein receptor. Glycosylates FGF23. This chain is Polypeptide N-acetylgalactosaminyltransferase 3 (GALNT3), found in Taeniopygia guttata (Zebra finch).